We begin with the raw amino-acid sequence, 704 residues long: G-protein coupled receptor-associated protein LMBRD2B (704 aa).

Topologically, residues 1-3 (MSG) are extracellular. A helical transmembrane segment spans residues 4 to 21 (AALGIEIVVVFFLALFLL). The Cytoplasmic segment spans residues 22–33 (HRYGDFKKQQRM). The chain crosses the membrane as a helical span at residues 34-54 (VLFGTLLAWYLCFLIVFILPL). Topologically, residues 55 to 111 (DVSTTIYNQCLIDQEAQTQTPSVSPVLSEQTTANASISPAKSTQRVCYKPWSYIPDG) are extracellular. The N-linked (GlcNAc...) asparagine glycan is linked to N88. A helical transmembrane segment spans residues 112-132 (IMPVFWRVVYWTSQCLTWLLL). Topologically, residues 133-157 (PFMQSYARSGGFTITGKIKTALIEN) are cytoplasmic. Residues 158–178 (AIYYGTYLFIFGSLLIYVAVH) form a helical membrane-spanning segment. The Extracellular segment spans residues 179-192 (PQWHLSWYELQTIG). The chain crosses the membrane as a helical span at residues 193–213 (ITAANTWGLFLLVLLLGYGLV). Topologically, residues 214–393 (DIPRSYWEAS…ECLLKQWFYR (180 aa)) are cytoplasmic. Positions 235-266 (KAAKLMTEKADSEENLEDVMEEVRKINESIKY) form a coiled coil. Residues 394-414 (VLAVVLALFSVAVVWSECTFF) form a helical membrane-spanning segment. Residues 415 to 438 (STHPVLSLFAVFIQLAERDYNYLY) are Extracellular-facing. Residues 439 to 459 (IEMACFITIFFLCTCVYSTVF) traverse the membrane as a helical segment. Topologically, residues 460–481 (RIRVFNYYYLASHHQTDAYSLQ) are cytoplasmic. The chain crosses the membrane as a helical span at residues 482-502 (FSGMLFCRLTPPLCLNFLGLI). The Extracellular segment spans residues 503–527 (HMDSAISHQAKKQTAYTSIMGSMRV). The chain crosses the membrane as a helical span at residues 528–548 (LSFIANGFYIYYPMLIVVLCI). Residues 549–704 (ATYFSLGTRC…SSRNRIFDDV (156 aa)) lie on the Cytoplasmic side of the membrane. Residues 576-612 (DLIDEGRELLRRERRKRQRIEDGENRRREWRERYAQR) are a coiled coil. Disordered stretches follow at residues 613-654 (DENA…QSGR) and 672-704 (TLTD…FDDV). Over residues 631–654 (YGETLNANTNRQAKYTRSGSQSGR) the composition is skewed to polar residues.

Belongs to the LIMR family.

Its subcellular location is the cell membrane. Functionally, may associate with G-protein coupled receptors and regulate downstream signaling pathways. This chain is G-protein coupled receptor-associated protein LMBRD2B (lmbrd2b), found in Danio rerio (Zebrafish).